Consider the following 315-residue polypeptide: Pantothenate synthetase (315 aa).

Residue 45 to 52 (MGALHEGH) coordinates ATP. H52 serves as the catalytic Proton donor. Position 77 (Q77) interacts with (R)-pantoate. A beta-alanine-binding site is contributed by Q77. ATP is bound at residue 163–166 (GEKD). Q169 contacts (R)-pantoate. ATP is bound by residues V192 and 200-203 (MSSR).

This sequence belongs to the pantothenate synthetase family. Homodimer.

The protein resides in the cytoplasm. The enzyme catalyses (R)-pantoate + beta-alanine + ATP = (R)-pantothenate + AMP + diphosphate + H(+). Its pathway is cofactor biosynthesis; (R)-pantothenate biosynthesis; (R)-pantothenate from (R)-pantoate and beta-alanine: step 1/1. Functionally, catalyzes the condensation of pantoate with beta-alanine in an ATP-dependent reaction via a pantoyl-adenylate intermediate. The protein is Pantothenate synthetase of Mycobacterium ulcerans (strain Agy99).